The sequence spans 124 residues: Small ribosomal subunit protein uS13 (124 aa).

The tract at residues 91-124 is disordered; it reads HRKGLPVNGQNTRNNARTRKGKPKAVTGKKQAGK.

This sequence belongs to the universal ribosomal protein uS13 family. In terms of assembly, part of the 30S ribosomal subunit. Forms a loose heterodimer with protein S19. Forms two bridges to the 50S subunit in the 70S ribosome.

Located at the top of the head of the 30S subunit, it contacts several helices of the 16S rRNA. In the 70S ribosome it contacts the 23S rRNA (bridge B1a) and protein L5 of the 50S subunit (bridge B1b), connecting the 2 subunits; these bridges are implicated in subunit movement. Contacts the tRNAs in the A and P-sites. In Acholeplasma laidlawii (strain PG-8A), this protein is Small ribosomal subunit protein uS13.